Here is a 339-residue protein sequence, read N- to C-terminus: MWQLWASLCCLLALADARSRPSFHPLSDELVNYVNKRNTTWQAGHNFYNVDVSYLKKLCGTFLGGPKPPQRVMFTEDLKLPESFDAREQWPQCPTIKEIRDQGSCGSCWAFGAVEAISDRICIHTNAHVSVEVSAEDLLTCCGSMCGDGCNGGYPAEAWNFWTRKGLVSGGLYESHVGCRPYSIPPCEHHVNGSRPPCTGEGDTPKCSKICEPGYSPTYKQDKHYGYNSYSVSNSERDIMAEIYKNGPVEGAFSVYSDFLLYKSGVYQHVTGEMMGGHAIRILGWGVENGTPYWLVANSWNTDWGDNGFFKILRGQDHCGIESEVVAGIPRTDQYWEKI.

Residues 1–17 (MWQLWASLCCLLALADA) form the signal peptide. Positions 18 to 79 (RSRPSFHPLS…QRVMFTEDLK (62 aa)) are cleaved as a propeptide — activation peptide. 6 disulfide bridges follow: C93–C122, C105–C150, C141–C207, C142–C146, C179–C211, and C187–C198. C108 is an active-site residue. A glycan (N-linked (GlcNAc...) asparagine) is linked at N192. K220 carries the post-translational modification N6-acetyllysine. Residues H278 and N298 contribute to the active site. Positions 334 to 339 (QYWEKI) are excised as a propeptide.

This sequence belongs to the peptidase C1 family. Dimer of a heavy chain and a light chain cross-linked by a disulfide bond. Interacts with SRPX2. Directly interacts with SHKBP1.

Its subcellular location is the lysosome. The protein resides in the melanosome. It is found in the secreted. It localises to the extracellular space. The protein localises to the apical cell membrane. The enzyme catalyses Hydrolysis of proteins with broad specificity for peptide bonds. Preferentially cleaves -Arg-Arg-|-Xaa bonds in small molecule substrates (thus differing from cathepsin L). In addition to being an endopeptidase, shows peptidyl-dipeptidase activity, liberating C-terminal dipeptides.. Functionally, thiol protease which is believed to participate in intracellular degradation and turnover of proteins. Cleaves matrix extracellular phosphoglycoprotein MEPE. Involved in the solubilization of cross-linked TG/thyroglobulin in the thyroid follicle lumen. Has also been implicated in tumor invasion and metastasis. The sequence is that of Cathepsin B (CTSB) from Pongo abelii (Sumatran orangutan).